Here is a 317-residue protein sequence, read N- to C-terminus: Cytochrome f (317 aa).

The signal sequence occupies residues 1–34 (MINFKKQIMKKTTFFLCAMLLVSSILIAPRSSLA). Positions 35, 55, 58, and 59 each coordinate heme. The chain crosses the membrane as a helical span at residues 284–304 (IIGLIAFFIGVGLTQILLVLK).

It belongs to the cytochrome f family. In terms of assembly, the 4 large subunits of the cytochrome b6-f complex are cytochrome b6, subunit IV (17 kDa polypeptide, PetD), cytochrome f and the Rieske protein, while the 4 small subunits are PetG, PetL, PetM and PetN. The complex functions as a dimer. Requires heme as cofactor.

The protein resides in the cellular thylakoid membrane. Functionally, component of the cytochrome b6-f complex, which mediates electron transfer between photosystem II (PSII) and photosystem I (PSI), cyclic electron flow around PSI, and state transitions. This is Cytochrome f from Prochlorococcus marinus (strain MIT 9515).